The sequence spans 784 residues: ATP-dependent 6-phosphofructokinase, platelet type (784 aa).

Position 1 is an N-acetylmethionine (methionine 1). Residues 1 to 398 form an N-terminal catalytic PFK domain 1 region; that stretch reads MSDLDSSSSS…NLNTYKRLAI (398 aa). 3 positions are modified to phosphoserine: serine 2, serine 6, and serine 20. Residues glycine 33, 96–97, and 126–129 each bind ATP; these read RC and GDGS. Residue aspartate 127 coordinates Mg(2+). Phosphoserine is present on serine 141. Substrate contacts are provided by residues 172 to 174, arginine 209, 216 to 218, glutamate 272, arginine 300, and 306 to 309; these read SID, MGR, and HVQR. Catalysis depends on aspartate 174, which acts as the Proton acceptor. Position 394 is an N6-acetyllysine (lysine 394). An interdomain linker region spans residues 399-410; it reads KLPDEKIVKSNC. The C-terminal regulatory PFK domain 2 stretch occupies residues 411 to 784; sequence NVAVINVGAP…LESLQHHEEL (374 aa). Arginine 480 is a binding site for beta-D-fructose 2,6-bisphosphate. Lysine 485 bears the N6-acetyllysine mark. Beta-D-fructose 2,6-bisphosphate contacts are provided by residues 537 to 541, arginine 575, 582 to 584, and glutamate 638; these read TVSNN and MGG. A glycan (O-linked (GlcNAc) serine) is linked at serine 539. At tyrosine 650 the chain carries Phosphotyrosine. Beta-D-fructose 2,6-bisphosphate contacts are provided by residues arginine 664 and 670–673; that span reads HMQQ. Lysine 687 is subject to N6-acetyllysine. Residue arginine 743 participates in beta-D-fructose 2,6-bisphosphate binding.

It belongs to the phosphofructokinase type A (PFKA) family. ATP-dependent PFK group I subfamily. Eukaryotic two domain clade 'E' sub-subfamily. In terms of assembly, homo- and heterotetramers. Phosphofructokinase (PFK) enzyme functions as a tetramer composed of different combinations of 3 types of subunits, called PFKM (M), PFKL (L) and PFKP (P). The composition of the PFK tetramer differs according to the tissue type it is present in. The kinetic and regulatory properties of the tetrameric enzyme are dependent on the subunit composition, hence can vary across tissues. Interacts with ATG4B; promoting phosphorylation of ATG4B. Mg(2+) is required as a cofactor. Post-translationally, glcNAcylation decreases enzyme activity. Expression is constant during tumor growth and markedly decreases when cell proliferation stops.

The protein localises to the cytoplasm. The catalysed reaction is beta-D-fructose 6-phosphate + ATP = beta-D-fructose 1,6-bisphosphate + ADP + H(+). The protein operates within carbohydrate degradation; glycolysis; D-glyceraldehyde 3-phosphate and glycerone phosphate from D-glucose: step 3/4. Allosterically activated by ADP, AMP, or fructose 2,6-bisphosphate, and allosterically inhibited by ATP or citrate. Catalyzes the phosphorylation of D-fructose 6-phosphate to fructose 1,6-bisphosphate by ATP, the first committing step of glycolysis. In Mus musculus (Mouse), this protein is ATP-dependent 6-phosphofructokinase, platelet type (Pfkp).